Reading from the N-terminus, the 388-residue chain is tRNA(Ile)-lysidine synthase (388 aa).

Residue 51-56 participates in ATP binding; sequence SGGRDS.

This sequence belongs to the tRNA(Ile)-lysidine synthase family.

It is found in the cytoplasm. The enzyme catalyses cytidine(34) in tRNA(Ile2) + L-lysine + ATP = lysidine(34) in tRNA(Ile2) + AMP + diphosphate + H(+). Ligates lysine onto the cytidine present at position 34 of the AUA codon-specific tRNA(Ile) that contains the anticodon CAU, in an ATP-dependent manner. Cytidine is converted to lysidine, thus changing the amino acid specificity of the tRNA from methionine to isoleucine. This chain is tRNA(Ile)-lysidine synthase, found in Bifidobacterium longum subsp. infantis (strain ATCC 15697 / DSM 20088 / JCM 1222 / NCTC 11817 / S12).